Reading from the N-terminus, the 308-residue chain is D-alanine--D-alanine ligase (308 aa).

In terms of domain architecture, ATP-grasp spans 103-302; it reads KFVFRAAGLP…YGELVSWMVE (200 aa). 130–184 is an ATP binding site; it reads MDPPYVIKPVSEGSSVGVFIVRAGDNRPPAELTSAEWNLGDEVMAERYIAGRELT. Asp-252, Glu-269, and Asn-271 together coordinate Mg(2+).

It belongs to the D-alanine--D-alanine ligase family. Requires Mg(2+) as cofactor. It depends on Mn(2+) as a cofactor.

The protein resides in the cytoplasm. The catalysed reaction is 2 D-alanine + ATP = D-alanyl-D-alanine + ADP + phosphate + H(+). It functions in the pathway cell wall biogenesis; peptidoglycan biosynthesis. Cell wall formation. In Parvibaculum lavamentivorans (strain DS-1 / DSM 13023 / NCIMB 13966), this protein is D-alanine--D-alanine ligase.